Reading from the N-terminus, the 520-residue chain is Membrane-bound glycerophospholipid O-acyltransferase 2 (520 aa).

A run of 6 helical transmembrane segments spans residues 22 to 42 (PIDQ…AIWF), 61 to 81 (TLLG…HFLV), 88 to 108 (CIMI…FALG), 184 to 204 (FMGI…FIEG), 237 to 257 (LLVC…LPVE), and 264 to 284 (FQAT…LLAA). Active-site residues include Asn342 and His373. Transmembrane regions (helical) follow at residues 366-386 (FILS…FLTG), 416-436 (VITW…FVLL), and 444-464 (FYSS…LLLP).

This sequence belongs to the membrane-bound acyltransferase family. Expressed in neutrophils.

The protein localises to the endoplasmic reticulum membrane. The catalysed reaction is a 1-acyl-sn-glycero-3-phosphocholine + an acyl-CoA = a 1,2-diacyl-sn-glycero-3-phosphocholine + CoA. It catalyses the reaction a 1-acyl-sn-glycero-3-phosphoethanolamine + an acyl-CoA = a 1,2-diacyl-sn-glycero-3-phosphoethanolamine + CoA. The enzyme catalyses a 1-acyl-sn-glycero-3-phosphate + an acyl-CoA = a 1,2-diacyl-sn-glycero-3-phosphate + CoA. It carries out the reaction (9Z)-hexadecenoyl-CoA + 1-hexadecanoyl-sn-glycero-3-phosphocholine = 1-hexadecanoyl-2-(9Z-hexadecenoyl)-sn-glycero-3-phosphocholine + CoA. The catalysed reaction is 1-hexadecanoyl-sn-glycero-3-phosphoethanolamine + (9Z)-octadecenoyl-CoA = 1-hexadecanoyl-2-(9Z-octadecenoyl)-sn-glycero-3-phosphoethanolamine + CoA. It catalyses the reaction 1-hexadecanoyl-sn-glycero-3-phosphoethanolamine + (9Z)-hexadecenoyl-CoA = 1-hexadecanoyl-2-(9Z)-hexadecenoyl-sn-glycero-3-phosphoethanolamine + CoA. The enzyme catalyses 1-(9Z-octadecenoyl)-sn-glycero-3-phospho-L-serine + hexadecanoyl-CoA = 1-(9Z)-octadecenoyl-2-hexadecanoyl-sn-glycero-3-phosphoserine + CoA. It carries out the reaction (9Z,12Z)-octadecadienoyl-CoA + 1-hexadecanoyl-sn-glycero-3-phosphocholine = 1-hexadecanoyl-2-(9Z,12Z-octadecadienoyl)-sn-glycero-3-phosphocholine + CoA. The catalysed reaction is 1-hexadecanoyl-sn-glycero-3-phosphocholine + (9Z)-octadecenoyl-CoA = 1-hexadecanoyl-2-(9Z-octadecenoyl)-sn-glycero-3-phosphocholine + CoA. It catalyses the reaction 1-hexadecanoyl-sn-glycero-3-phosphate + (9Z)-hexadecenoyl-CoA = 1-hexadecanoyl-2-[(9Z)-hexadec-9-enoyl]-sn-glycero-3-phosphate + CoA. The enzyme catalyses 1-hexadecanoyl-sn-glycero-3-phosphate + (9Z)-octadecenoyl-CoA = 1-hexadecanoyl-2-(9Z-octadecenoyl)-sn-glycero-3-phosphate + CoA. It carries out the reaction a 1-O-(1Z-alkenyl)-sn-glycero-3-phosphocholine + (9Z)-octadecenoyl-CoA = 1-O-(1Z)-alkenyl-2-(9Z)-octadecenoyl-sn-glycero-3-phosphocholine + CoA. The catalysed reaction is a 1-O-(1Z-alkenyl)-sn-glycero-3-phosphoethanolamine + (9Z)-octadecenoyl-CoA = 1-O-(1Z)-alkenyl-2-(9Z)-octadecenoyl-sn-glycero-3-phosphoethanolamine + CoA. It catalyses the reaction 1-octadecanoyl-sn-glycero-3-phosphoethanolamine + (9Z)-octadecenoyl-CoA = 1-octadecanoyl-2-(9Z-octadecenoyl)-sn-glycero-3-phosphoethanolamine + CoA. The enzyme catalyses 1-octadecanoyl-sn-glycero-3-phosphocholine + (9Z)-octadecenoyl-CoA = 1-octadecanoyl-2-(9Z-octadecenoyl)-sn-glycero-3-phosphocholine + CoA. It carries out the reaction 1-(9Z-octadecenoyl)-sn-glycero-3-phosphoethanolamine + (9Z)-octadecenoyl-CoA = 1,2-di-(9Z-octadecenoyl)-sn-glycero-3-phosphoethanolamine + CoA. Its pathway is lipid metabolism; phospholipid metabolism. With respect to regulation, partially inhibited by thimerosal. In terms of biological role, acyltransferase which catalyzes the transfer of an acyl group from an acyl-CoA to a lysophospholipid leading to the production of a phospholipid and participates in the reacylation step of the phospholipid remodeling pathway also known as the Lands cycle. Catalyzes preferentially the acylation of lysophosphatidylethanolamine (1-acyl-sn-glycero-3-phosphoethanolamine or LPE) and lysophosphatidic acid (LPA) and to a lesser extend lysophosphatidylcholine (LPC) and lysophosphatidylserine (LPS). Prefers oleoyl-CoA as the acyl donor. May be involved in chondrocyte differentiation. In Homo sapiens (Human), this protein is Membrane-bound glycerophospholipid O-acyltransferase 2.